The sequence spans 450 residues: Exodeoxyribonuclease 7 large subunit (450 aa).

This sequence belongs to the XseA family. In terms of assembly, heterooligomer composed of large and small subunits.

It localises to the cytoplasm. The catalysed reaction is Exonucleolytic cleavage in either 5'- to 3'- or 3'- to 5'-direction to yield nucleoside 5'-phosphates.. In terms of biological role, bidirectionally degrades single-stranded DNA into large acid-insoluble oligonucleotides, which are then degraded further into small acid-soluble oligonucleotides. In Listeria innocua serovar 6a (strain ATCC BAA-680 / CLIP 11262), this protein is Exodeoxyribonuclease 7 large subunit.